Consider the following 207-residue polypeptide: Na(+)-translocating ferredoxin:NAD(+) oxidoreductase complex subunit G (207 aa).

Residues 18 to 38 form a helical membrane-spanning segment; it reads GLILFVISAVAACALALTNYV. Thr-185 carries the post-translational modification FMN phosphoryl threonine.

It belongs to the RnfG family. The complex is composed of six subunits: RnfA, RnfB, RnfC, RnfD, RnfE and RnfG. Requires FMN as cofactor.

The protein resides in the cell membrane. The catalysed reaction is 2 reduced [2Fe-2S]-[ferredoxin] + Na(+)(in) + NAD(+) + H(+) = 2 oxidized [2Fe-2S]-[ferredoxin] + Na(+)(out) + NADH. Part of a membrane-bound complex that couples electron transfer with translocation of ions across the membrane. Couples electron transfer from reduced ferredoxin to NAD(+) with electrogenic movement of Na(+) out of the cell. Involved in caffeate respiration. The protein is Na(+)-translocating ferredoxin:NAD(+) oxidoreductase complex subunit G of Acetobacterium woodii (strain ATCC 29683 / DSM 1030 / JCM 2381 / KCTC 1655 / WB1).